Consider the following 84-residue polypeptide: MAHKKAGGSTRNGRDSESKRLGVKRFGGESVLAGNIIVRQRGTKFHAGVNVGIGRDHTLFALTDGKVKFEVKGPKNRKFISIEA.

A disordered region spans residues Met1–Gly22.

The protein belongs to the bacterial ribosomal protein bL27 family.

The polypeptide is Large ribosomal subunit protein bL27 (Shewanella loihica (strain ATCC BAA-1088 / PV-4)).